The sequence spans 577 residues: Arginine--tRNA ligase (577 aa).

Positions 123 to 133 (PNLAKEMHVGH) match the 'HIGH' region motif.

The protein belongs to the class-I aminoacyl-tRNA synthetase family. As to quaternary structure, monomer.

It localises to the cytoplasm. The catalysed reaction is tRNA(Arg) + L-arginine + ATP = L-arginyl-tRNA(Arg) + AMP + diphosphate. The sequence is that of Arginine--tRNA ligase from Marinomonas sp. (strain MWYL1).